Consider the following 317-residue polypeptide: Type II methyltransferase M.MgeORF184P (317 aa).

The protein belongs to the N(4)/N(6)-methyltransferase family.

It catalyses the reaction a 2'-deoxyadenosine in DNA + S-adenosyl-L-methionine = an N(6)-methyl-2'-deoxyadenosine in DNA + S-adenosyl-L-homocysteine + H(+). Its function is as follows. Probably recognizes the double-stranded sequence 5'-CTAT-3' and methylates A-3 on only one strand; as the bacterial DNA is methylated on this sequence and this is the only type II methylase in the genome, it is probably responsible for all of the methylation on this site in the genome. The protein is Type II methyltransferase M.MgeORF184P of Mycoplasma genitalium (strain ATCC 33530 / DSM 19775 / NCTC 10195 / G37) (Mycoplasmoides genitalium).